Reading from the N-terminus, the 458-residue chain is Sushi repeat-containing protein SRPX2 (458 aa).

Residues 1-18 (MEASITVLLFAFTKVASS) form the signal peptide. 3 consecutive Sushi domains span residues 62 to 112 (ATCY…HCRR), 113 to 171 (IQCH…VCVD), and 255 to 314 (RRCP…TCTP). Cystine bridges form between Cys-64/Cys-98, Cys-84/Cys-110, Cys-115/Cys-156, and Cys-142/Cys-169. The HYR domain occupies 170–254 (VDLDPPKIQC…SCKFIVKVQV (85 aa)). Cystine bridges form between Cys-257-Cys-299 and Cys-285-Cys-312.

As to quaternary structure, forms homooligomers.

Its subcellular location is the secreted. The protein resides in the cytoplasm. The protein localises to the cell surface. It is found in the synapse. Functionally, may play a role in angiogenesis, synapse formation, cellular migration and adhesion. The protein is Sushi repeat-containing protein SRPX2 (srpx2) of Xenopus laevis (African clawed frog).